The primary structure comprises 291 residues: Urease accessory protein UreD (291 aa).

It belongs to the UreD family. UreD, UreF and UreG form a complex that acts as a GTP-hydrolysis-dependent molecular chaperone, activating the urease apoprotein by helping to assemble the nickel containing metallocenter of UreC. The UreE protein probably delivers the nickel.

It localises to the cytoplasm. Functionally, required for maturation of urease via the functional incorporation of the urease nickel metallocenter. This Polynucleobacter asymbioticus (strain DSM 18221 / CIP 109841 / QLW-P1DMWA-1) (Polynucleobacter necessarius subsp. asymbioticus) protein is Urease accessory protein UreD.